The sequence spans 426 residues: MKKDSVIFDLIEKEHQRQLKGIELIASENFVSEQVMQAMGSCMTNKYAEGYPGKRYYGGCEVVDQSEQIAIDRIKQLYGAEWANVQPHSGAQANMAVLLACLEAGDTFMGLNLEHGGHLSHGSLVNSSGILYRPIGYNLSEETGMVDYDHMEKMAIEHKPKLIIGGGSAYSREWDYKRMREIADKVGALLMIDMAHPAGLIAAGLLENPVKYAHIVTSTTHKTLRGPRGGIILMGKDFDNPWGKKTPKGEIKKMSALLDSAVFPGVQGGPLEHVIAAKAVAFGEALDPSFKEYQTQVKKNAAVLAQAFMDKGYKVISGGTDNHSMLIDLRPKFPELTGKVAEKALVAADITVNKNMVPFDSRSAFQTSGFRVGTPAITTRGVKEDKMGYIVELIDRVLSAPEDEAVIASVRTEVNRMMADYPLFAW.

(6S)-5,6,7,8-tetrahydrofolate is bound by residues Leu113 and 117-119 (GHL). Lys222 carries the post-translational modification N6-(pyridoxal phosphate)lysine. A (6S)-5,6,7,8-tetrahydrofolate-binding site is contributed by 363–365 (SAF).

Belongs to the SHMT family. As to quaternary structure, homodimer. The cofactor is pyridoxal 5'-phosphate.

The protein localises to the cytoplasm. It catalyses the reaction (6R)-5,10-methylene-5,6,7,8-tetrahydrofolate + glycine + H2O = (6S)-5,6,7,8-tetrahydrofolate + L-serine. Its pathway is one-carbon metabolism; tetrahydrofolate interconversion. It participates in amino-acid biosynthesis; glycine biosynthesis; glycine from L-serine: step 1/1. Catalyzes the reversible interconversion of serine and glycine with tetrahydrofolate (THF) serving as the one-carbon carrier. This reaction serves as the major source of one-carbon groups required for the biosynthesis of purines, thymidylate, methionine, and other important biomolecules. Also exhibits THF-independent aldolase activity toward beta-hydroxyamino acids, producing glycine and aldehydes, via a retro-aldol mechanism. The polypeptide is Serine hydroxymethyltransferase (Porphyromonas gingivalis (strain ATCC 33277 / DSM 20709 / CIP 103683 / JCM 12257 / NCTC 11834 / 2561)).